We begin with the raw amino-acid sequence, 573 residues long: MANSPHGGVLKDLLARDAPRHDQLAAEAESLPAIVLSERQLCDLELIMNGGFSPLEGFMNQKDFDGVCENCRLADGNLFSMPITLDASQQVINELKLQAGSRVTLRDFRDDRNLAILTIDDIYRADKEKEAKLVFGGDPEHPAIKYLNTKVEEFYIGGKIEAVNKLNHYDYVALRYTPAELRIHFDKLGWSRVVAFQTRNPMHRAHRELTVRAARARAANVLIHPVVGLTKPGDIDHFTRVRAYQALLPRYPNGMAVLGLLGLAMRMGGPREAIWHAIIRKNHGATHFIVGRDHAGPGKNSKGEEFYGPYDAQHAVEKYKDELGIEVVEFQQVTYLPDTDEYKPKDEVPAGVKTLDISGTELRNRLRTGAHIPEWFSYPEVVKILRESSPPRHTQGFTVFLTGYQNSGKDAIARALQVTLNQQGGRAVSLLLGDTVRHELSSELGFSREDRHTNIQRIAFVASELTKAGAAVIAAPIAPYEHSRKAAREAVSQHGSFFLVHVNTPLEYCEKTDKRGIYAKARAGEIKGFTGVDDPYEAPENAHLTVDVSKQSVRSIVHEIILLLETEGFFDRA.

Residues 1–169 (MANSPHGGVL…IEAVNKLNHY (169 aa)) are N-terminal. The interval 170–394 (DYVALRYTPA…LRESSPPRHT (225 aa)) is catalytic. A sulfate-binding site is contributed by glutamine 197. Residues 197–200 (QTRN) and 291–294 (GRDH) each bind ATP. Catalysis depends on residues threonine 198, arginine 199, and asparagine 200. Position 199 (arginine 199) interacts with sulfate. Alanine 295 is a sulfate binding site. Valine 333 lines the ATP pocket. An allosteric regulation domain; adenylyl-sulfate kinase-like region spans residues 395-573 (QGFTVFLTGY…LETEGFFDRA (179 aa)). 3'-phosphoadenylyl sulfate-binding positions include 434–437 (DTVR), arginine 451, 477–478 (IA), and arginine 515.

This sequence in the N-terminal section; belongs to the sulfate adenylyltransferase family. The protein in the C-terminal section; belongs to the APS kinase family. As to quaternary structure, homohexamer. Dimer of trimers.

Its subcellular location is the cytoplasm. The catalysed reaction is sulfate + ATP + H(+) = adenosine 5'-phosphosulfate + diphosphate. The protein operates within sulfur metabolism; hydrogen sulfide biosynthesis; sulfite from sulfate: step 1/3. With respect to regulation, allosterically inhibited by 3'-phosphoadenosine 5'-phosphosulfate (PAPS). In terms of biological role, catalyzes the first intracellular reaction of sulfate assimilation, forming adenosine-5'-phosphosulfate (APS) from inorganic sulfate and ATP. Plays an important role in sulfate activation as a component of the biosynthesis pathway of sulfur-containing amino acids. This is Sulfate adenylyltransferase from Aspergillus oryzae (strain ATCC 42149 / RIB 40) (Yellow koji mold).